Reading from the N-terminus, the 255-residue chain is tRNA pseudouridine synthase A (255 aa).

Asp-60 (nucleophile) is an active-site residue. Tyr-118 contacts substrate.

Belongs to the tRNA pseudouridine synthase TruA family. Homodimer.

The catalysed reaction is uridine(38/39/40) in tRNA = pseudouridine(38/39/40) in tRNA. Formation of pseudouridine at positions 38, 39 and 40 in the anticodon stem and loop of transfer RNAs. The sequence is that of tRNA pseudouridine synthase A from Leuconostoc mesenteroides subsp. mesenteroides (strain ATCC 8293 / DSM 20343 / BCRC 11652 / CCM 1803 / JCM 6124 / NCDO 523 / NBRC 100496 / NCIMB 8023 / NCTC 12954 / NRRL B-1118 / 37Y).